The following is a 97-amino-acid chain: Signal recognition particle 19 kDa protein (97 aa).

It belongs to the SRP19 family. In terms of assembly, part of the signal recognition particle protein translocation system, which is composed of SRP and FtsY. Archaeal SRP consists of a 7S RNA molecule of 300 nucleotides and two protein subunits: SRP54 and SRP19.

Its subcellular location is the cytoplasm. Its function is as follows. Involved in targeting and insertion of nascent membrane proteins into the cytoplasmic membrane. Binds directly to 7S RNA and mediates binding of the 54 kDa subunit of the SRP. The sequence is that of Signal recognition particle 19 kDa protein from Methanocella arvoryzae (strain DSM 22066 / NBRC 105507 / MRE50).